The primary structure comprises 370 residues: ADP-ribosylhydrolase ARH3 (370 aa).

Mg(2+)-binding residues include Glu35, Asp66, and Asp67. Asp66 contacts substrate. Residues 135–141, His171, Leu225, and Ile261 contribute to the substrate site; that span reads RGSFGNG. Mg(2+)-binding residues include Asp304, Asp306, and Thr307.

Belongs to the ADP-ribosylglycohydrolase family. Monomer. Mg(2+) is required as a cofactor.

The protein localises to the nucleus. It localises to the cytoplasm. The protein resides in the chromosome. Its subcellular location is the mitochondrion matrix. The catalysed reaction is [(1''-&gt;2')-ADP-alpha-D-ribose](n) + H2O = [(1''-&gt;2')-ADP-alpha-D-ribose](n-1) + ADP-D-ribose. It carries out the reaction 1''-O-acetyl-ADP-alpha-D-ribose + H2O = ADP-D-ribose + acetate + H(+). It catalyses the reaction O-(ADP-D-ribosyl)-L-seryl-[protein] + H2O = ADP-D-ribose + L-seryl-[protein]. The enzyme catalyses alpha-NAD(+) + H2O = ADP-D-ribose + nicotinamide + H(+). The protein undergoes a dramatic conformational switch from closed to open states upon substrate-binding, which enables specific substrate recognition for the 1''-O-linkage. The glutamate flap (Glu-35) blocks substrate entrance to Mg(2+) in the unliganded closed state. In presence of substrate, Glu-35 is ejected from the active site: this closed-to-open transition significantly widens the substrate-binding channel and precisely positions the scissile 1''-O-linkage for cleavage while securing tightly 2'- and 3'-hydroxyls of ADP-ribose. ADP-ribosylhydrolase that preferentially hydrolyzes the scissile alpha-O-linkage attached to the anomeric C1'' position of ADP-ribose and acts on different substrates, such as proteins ADP-ribosylated on serine and threonine, free poly(ADP-ribose) and O-acetyl-ADP-D-ribose. Specifically acts as a serine mono-ADP-ribosylhydrolase by mediating the removal of mono-ADP-ribose attached to serine residues on proteins, thereby playing a key role in DNA damage response. Serine ADP-ribosylation of proteins constitutes the primary form of ADP-ribosylation of proteins in response to DNA damage. Does not hydrolyze ADP-ribosyl-arginine, -cysteine, -diphthamide, or -asparagine bonds. Also able to degrade protein free poly(ADP-ribose), which is synthesized in response to DNA damage: free poly(ADP-ribose) acts as a potent cell death signal and its degradation by ADPRHL2 protects cells from poly(ADP-ribose)-dependent cell death, a process named parthanatos. Also hydrolyzes free poly(ADP-ribose) in mitochondria. Specifically digests O-acetyl-ADP-D-ribose, a product of deacetylation reactions catalyzed by sirtuins. Specifically degrades 1''-O-acetyl-ADP-D-ribose isomer, rather than 2''-O-acetyl-ADP-D-ribose or 3''-O-acetyl-ADP-D-ribose isomers. The chain is ADP-ribosylhydrolase ARH3 (adprs) from Danio rerio (Zebrafish).